The following is a 233-amino-acid chain: Glucosamine-6-phosphate deaminase (233 aa).

The Proton acceptor; for enolization step role is filled by aspartate 62. Asparagine 128 functions as the For ring-opening step in the catalytic mechanism. Catalysis depends on histidine 130, which acts as the Proton acceptor; for ring-opening step. Catalysis depends on glutamate 135, which acts as the For ring-opening step.

It belongs to the glucosamine/galactosamine-6-phosphate isomerase family. NagB subfamily.

It carries out the reaction alpha-D-glucosamine 6-phosphate + H2O = beta-D-fructose 6-phosphate + NH4(+). Its pathway is amino-sugar metabolism; N-acetylneuraminate degradation; D-fructose 6-phosphate from N-acetylneuraminate: step 5/5. Its function is as follows. Catalyzes the reversible isomerization-deamination of glucosamine 6-phosphate (GlcN6P) to form fructose 6-phosphate (Fru6P) and ammonium ion. This Streptococcus pneumoniae serotype 4 (strain ATCC BAA-334 / TIGR4) protein is Glucosamine-6-phosphate deaminase.